Reading from the N-terminus, the 400-residue chain is Formate-dependent phosphoribosylglycinamide formyltransferase (400 aa).

N(1)-(5-phospho-beta-D-ribosyl)glycinamide is bound by residues 22–23 (EL) and Glu-82. ATP contacts are provided by residues Arg-115, Lys-157, 162-167 (SSGKGQ), 197-200 (EGFI), and Glu-205. The region spanning 120–315 (RLAAETLGVP…EFELHARAIL (196 aa)) is the ATP-grasp domain. The Mg(2+) site is built by Glu-274 and Glu-286. Residues Asp-293, Lys-362, and 369-370 (RR) contribute to the N(1)-(5-phospho-beta-D-ribosyl)glycinamide site.

It belongs to the PurK/PurT family. As to quaternary structure, homodimer.

It carries out the reaction N(1)-(5-phospho-beta-D-ribosyl)glycinamide + formate + ATP = N(2)-formyl-N(1)-(5-phospho-beta-D-ribosyl)glycinamide + ADP + phosphate + H(+). The protein operates within purine metabolism; IMP biosynthesis via de novo pathway; N(2)-formyl-N(1)-(5-phospho-D-ribosyl)glycinamide from N(1)-(5-phospho-D-ribosyl)glycinamide (formate route): step 1/1. Its function is as follows. Involved in the de novo purine biosynthesis. Catalyzes the transfer of formate to 5-phospho-ribosyl-glycinamide (GAR), producing 5-phospho-ribosyl-N-formylglycinamide (FGAR). Formate is provided by PurU via hydrolysis of 10-formyl-tetrahydrofolate. The chain is Formate-dependent phosphoribosylglycinamide formyltransferase from Variovorax paradoxus (strain S110).